The primary structure comprises 112 residues: Type III inner-rod protein PscI (112 aa).

Belongs to the YscI/HrpB family. In terms of assembly, homomultimer (through its C-terminal region).

In terms of biological role, component of the type III secretion (T3S) injectisome that translocates effector toxins into host cells, facilitating the establishment and dissemination of infection. Polymerizes into flexible and regularly twisted fibrils and plays an essential role in needle assembly. This chain is Type III inner-rod protein PscI (pscI), found in Pseudomonas aeruginosa (strain ATCC 15692 / DSM 22644 / CIP 104116 / JCM 14847 / LMG 12228 / 1C / PRS 101 / PAO1).